Consider the following 80-residue polypeptide: Conotoxin VnMSGL-0121 (80 aa).

A signal peptide spans 1–20 (MSGLGIMVLTLLLLVSMATS). Residues 21 to 44 (HQDGGGKQATQRDAINVRRRRSIT) constitute a propeptide that is removed on maturation. Cystine bridges form between C52-C65, C56-C74, and C64-C78. F79 is modified (phenylalanine amide).

Belongs to the conotoxin O3 superfamily. As to expression, expressed by the venom duct.

Its subcellular location is the secreted. The chain is Conotoxin VnMSGL-0121 from Conus ventricosus (Mediterranean cone).